A 196-amino-acid polypeptide reads, in one-letter code: Putative NADH dehydrogenase/NAD(P)H nitroreductase Smlt0482 (196 aa).

The protein belongs to the nitroreductase family. HadB/RutE subfamily. It depends on FMN as a cofactor.

The polypeptide is Putative NADH dehydrogenase/NAD(P)H nitroreductase Smlt0482 (Stenotrophomonas maltophilia (strain K279a)).